The sequence spans 399 residues: S-adenosylmethionine synthase (399 aa).

ATP is bound at residue 135 to 140; that stretch reads GEGSTD.

Belongs to the AdoMet synthase 2 family. It depends on Mg(2+) as a cofactor.

It catalyses the reaction L-methionine + ATP + H2O = S-adenosyl-L-methionine + phosphate + diphosphate. The protein operates within amino-acid biosynthesis; S-adenosyl-L-methionine biosynthesis; S-adenosyl-L-methionine from L-methionine: step 1/1. In terms of biological role, catalyzes the formation of S-adenosylmethionine from methionine and ATP. The chain is S-adenosylmethionine synthase (mat) from Archaeoglobus fulgidus (strain ATCC 49558 / DSM 4304 / JCM 9628 / NBRC 100126 / VC-16).